Here is a 451-residue protein sequence, read N- to C-terminus: Oxygen-independent coproporphyrinogen III oxidase (451 aa).

Positions 45 to 278 (IPAGAAISLY…FETARELFLA (234 aa)) constitute a Radical SAM core domain. Position 54 (Tyr-54) interacts with S-adenosyl-L-methionine. 2 residues coordinate [4Fe-4S] cluster: Cys-60 and Cys-64. Residue Phe-66 coordinates S-adenosyl-L-methionine. Cys-67 is a binding site for [4Fe-4S] cluster. S-adenosyl-L-methionine is bound by residues Gly-111, 112–113 (GT), Glu-144, Gln-171, Arg-183, Asp-208, Ala-242, and Ile-328.

It belongs to the anaerobic coproporphyrinogen-III oxidase family. Monomer. [4Fe-4S] cluster is required as a cofactor.

Its subcellular location is the cytoplasm. It catalyses the reaction coproporphyrinogen III + 2 S-adenosyl-L-methionine = protoporphyrinogen IX + 2 5'-deoxyadenosine + 2 L-methionine + 2 CO2. Its pathway is porphyrin-containing compound metabolism; protoporphyrin-IX biosynthesis; protoporphyrinogen-IX from coproporphyrinogen-III (AdoMet route): step 1/1. In terms of biological role, involved in the heme biosynthesis. Catalyzes the anaerobic oxidative decarboxylation of propionate groups of rings A and B of coproporphyrinogen III to yield the vinyl groups in protoporphyrinogen IX. This is Oxygen-independent coproporphyrinogen III oxidase (hemN) from Paracoccus denitrificans (strain Pd 1222).